The following is a 260-amino-acid chain: MSDILDRIVARKHEEVAQLRRDGISLPEEFAEKRPAPPRGFRQSLLSHQGLSIIAEAKKASPSKGLICEDFDPVAIAKNYERCGVQAISVLTDRDFFQGDLRYLLQVREAVGLPVLRKDFIIDELQLKEASLYGADAILLIAAILDEAQLRDYRCYAEELGMDSLVEVHDEEETEKALASGCNLLGVNNRNLKDFSVDVETTFRIRKMVPIEIPLVSESGLKEAADLRRLAEAGVCAALIGETLMRMGSAGDVLAELWRP.

Belongs to the TrpC family.

The catalysed reaction is 1-(2-carboxyphenylamino)-1-deoxy-D-ribulose 5-phosphate + H(+) = (1S,2R)-1-C-(indol-3-yl)glycerol 3-phosphate + CO2 + H2O. It functions in the pathway amino-acid biosynthesis; L-tryptophan biosynthesis; L-tryptophan from chorismate: step 4/5. The polypeptide is Indole-3-glycerol phosphate synthase (Desulfotalea psychrophila (strain LSv54 / DSM 12343)).